A 135-amino-acid polypeptide reads, in one-letter code: MAQQKSAAAASQRARKKVKKNVADGIAHVHTSFNNTIITITDRQGNALSWATSGGQGFKGSRKSTPFAAQVAAEVAGKTAIECGIKSLEAQIKGPGPGRESAVRALNSLGIKITEIQDVTPVPHNGCRPPKRRRI.

It belongs to the universal ribosomal protein uS11 family. In terms of assembly, part of the 30S ribosomal subunit. Interacts with proteins S7 and S18. Binds to IF-3.

Its function is as follows. Located on the platform of the 30S subunit, it bridges several disparate RNA helices of the 16S rRNA. Forms part of the Shine-Dalgarno cleft in the 70S ribosome. The protein is Small ribosomal subunit protein uS11 of Polynucleobacter necessarius subsp. necessarius (strain STIR1).